The chain runs to 330 residues: B-cell receptor CD22 (330 aa).

Residues 1–17 form the signal peptide; it reads MHLLGPWLLLLEYLAFS. Positions 18–136 constitute an Ig-like V-type domain; the sequence is DSSKWAFEHP…MERIHLNVSE (119 aa). The Extracellular portion of the chain corresponds to 18–330; sequence DSSKWAFEHP…VFLQVQYAPE (313 aa). 3 disulfides stabilise this stretch: Cys37/Cys165, Cys42/Cys100, and Cys159/Cys217. N-linked (GlcNAc...) asparagine glycans are attached at residues Asn65, Asn99, and Asn110. Position 118 (Arg118) interacts with N-acetylneuraminate. N-linked (GlcNAc...) asparagine glycans are attached at residues Asn133, Asn162, Asn187, and Asn229. Ig-like C2-type domains are found at residues 141-233 and 240-324; these read PHIQ…DTVQ and PKLK…VFLQ. Cys263 and Cys307 are disulfide-bonded.

It belongs to the immunoglobulin superfamily. SIGLEC (sialic acid binding Ig-like lectin) family. Predominantly monomer of isoform CD22-beta. Also found as heterodimer of isoform CD22-beta and a shorter isoform. Interacts with PTPN6/SHP-1, LYN, SYK, PIK3R1/PIK3R2 and PLCG1 upon phosphorylation. Interacts with GRB2, INPP5D and SHC1 upon phosphorylation. May form a complex with INPP5D/SHIP, GRB2 and SHC1.

It is found in the cell membrane. In terms of biological role, most highly expressed siglec (sialic acid-binding immunoglobulin-like lectin) on B-cells that plays a role in various aspects of B-cell biology including differentiation, antigen presentation, and trafficking to bone marrow. Binds to alpha 2,6-linked sialic acid residues of surface molecules such as CD22 itself, CD45 and IgM in a cis configuration. Can also bind to ligands on other cells as an adhesion molecule in a trans configuration. Acts as an inhibitory coreceptor on the surface of B-cells and inhibits B-cell receptor induced signaling, characterized by inhibition of the calcium mobilization and cellular activation. Mechanistically, the immunoreceptor tyrosine-based inhibitory motif domain is phosphorylated by the Src kinase LYN, which in turn leads to the recruitment of the protein tyrosine phosphatase 1/PTPN6, leading to the negative regulation of BCR signaling. If this negative signaling from is of sufficient strength, apoptosis of the B-cell can be induced. This chain is B-cell receptor CD22, found in Pongo pygmaeus (Bornean orangutan).